We begin with the raw amino-acid sequence, 204 residues long: 8-oxoguanine DNA glycosylase/AP lyase (204 aa).

Active-site residues include K129 and D147.

This sequence belongs to the type-2 OGG1 family.

The catalysed reaction is 2'-deoxyribonucleotide-(2'-deoxyribose 5'-phosphate)-2'-deoxyribonucleotide-DNA = a 3'-end 2'-deoxyribonucleotide-(2,3-dehydro-2,3-deoxyribose 5'-phosphate)-DNA + a 5'-end 5'-phospho-2'-deoxyribonucleoside-DNA + H(+). Catalyzes the excision of an oxidatively damaged form of guanine (7,8-dihydro-8-oxoguanine = 8-oxoG) from DNA. Also cleaves the DNA backbone at apurinic/apyrimidinic sites (AP sites). Prefers oligomers containing 8-oxoG:C, 8-oxoG:T and 8-oxoG:G base pairs, and is less effective on oligomers containing 8-oxoG:A mispairs. The protein is 8-oxoguanine DNA glycosylase/AP lyase of Thermoplasma volcanium (strain ATCC 51530 / DSM 4299 / JCM 9571 / NBRC 15438 / GSS1).